An 847-amino-acid chain; its full sequence is UPF0182 protein CYB_0372 (847 aa).

The next 7 membrane-spanning stretches (helical) occupy residues 7–27 (GLFL…LAAF), 51–71 (WGLG…NICS), 76–96 (ATLA…AGSL), 141–161 (FNLV…ELGL), 168–188 (LALS…LFLI), 220–240 (LPAT…FWAL), and 259–279 (WASS…FGLL).

This sequence belongs to the UPF0182 family.

It localises to the cell membrane. This is UPF0182 protein CYB_0372 from Synechococcus sp. (strain JA-2-3B'a(2-13)) (Cyanobacteria bacterium Yellowstone B-Prime).